The sequence spans 294 residues: Non-selective voltage-gated ion channel VDAC2 (294 aa).

Position 2 is an N-acetylalanine (Ala-2). ATP is bound by residues Lys-23 and Lys-31. N6-acetyllysine; alternate is present on Lys-31. Lys-31 bears the N6-succinyllysine; alternate mark. Lys-31 is covalently cross-linked (Glycyl lysine isopeptide (Lys-Gly) (interchain with G-Cter in ubiquitin); alternate). 2 consecutive transmembrane segments (beta stranded) span residues 37-46 and 50-58; these read LVKLDVKTKS and VEFSTSGSS. Residue Lys-64 forms a Glycyl lysine isopeptide (Lys-Gly) (interchain with G-Cter in ubiquitin) linkage. A beta stranded membrane pass occupies residues 65-75; sequence VTGTLETKYKW. Residue Tyr-78 is modified to Phosphotyrosine. 3 consecutive transmembrane segments (beta stranded) span residues 80–87, 91–100, and 106–115; these read LTFTEKWN, TLGTEIAIED, and LKLTFDTTFS. A Phosphothreonine modification is found at Thr-118. Lys-120 is subject to N6-acetyllysine; alternate. A Glycyl lysine isopeptide (Lys-Gly) (interchain with G-Cter in ubiquitin); alternate cross-link involves residue Lys-120. Residue Lys-121 forms a Glycyl lysine isopeptide (Lys-Gly) (interchain with G-Cter in ubiquitin) linkage. The next 4 membrane-spanning stretches (beta stranded) occupy residues 122 to 131, 134 to 141, 148 to 156, and 161 to 169; these read SGKIKSSYKR, INLGCDVD, AIHGSAVFG, and LAGYQMTFD. Lys-172 is covalently cross-linked (Glycyl lysine isopeptide (Lys-Gly) (interchain with G-Cter in ubiquitin)). 6 beta stranded membrane-spanning segments follow: residues 174-186, 189-196, 200-209, 213-222, 229-238, and 242-249; these read KLTR…GYRT, FQLHTNVN, EFGGSIYQKV, LDTSVNLAWT, RFGIAAKYQL, and ASISAKVN. The residue at position 251 (Ser-251) is a Phosphoserine. Residues 253–255 and 271–275 contribute to the NAD(+) site; these read LIG and SALVD. The next 2 membrane-spanning stretches (beta stranded) occupy residues 253–262 and 265–274; these read LIGVGYTQTL and GVKLTLSALV. Lys-277 bears the N6-acetyllysine; alternate mark. Lys-277 is covalently cross-linked (Glycyl lysine isopeptide (Lys-Gly) (interchain with G-Cter in ubiquitin); alternate). The beta stranded transmembrane segment at 284–293 threads the bilayer; that stretch reads HKLGLALELE.

The protein belongs to the eukaryotic mitochondrial porin family. As to quaternary structure, monomer, homodimer and higher order oligomers; formation of higher order structures is necessary for scramblase activity. Interacts with ARMC12 in a TBC1D21-dependent manner. Interacts with KLC3. Interacts with SPATA33. Interacts with PPP3CC in a SPATA33-dependent manner. Post-translationally, ubiquitinated by PRKN during mitophagy, leading to its degradation and enhancement of mitophagy. Deubiquitinated by USP30.

It localises to the mitochondrion outer membrane. The protein localises to the membrane. The enzyme catalyses chloride(in) = chloride(out). The catalysed reaction is K(+)(in) = K(+)(out). It carries out the reaction a 1,2-diacyl-sn-glycero-3-phospho-L-serine(in) = a 1,2-diacyl-sn-glycero-3-phospho-L-serine(out). It catalyses the reaction a 1,2-diacyl-sn-glycero-3-phosphocholine(in) = a 1,2-diacyl-sn-glycero-3-phosphocholine(out). The enzyme catalyses a 1,2-diacyl-sn-glycero-3-phospho-(1D-myo-inositol)(in) = a 1,2-diacyl-sn-glycero-3-phospho-(1D-myo-inositol)(out). In terms of biological role, non-selective voltage-gated ion channel that mediates the transport of anions and cations through the mitochondrion outer membrane and plasma membrane. The channel adopts an open conformation at zero mV and a closed conformation at both positive and negative potentials. There are two populations of channels; the main that functions in a lower open-state conductance with lower ion selectivity, that switch, in a voltage-dependent manner, from the open to a low-conducting 'closed' state and the other that has a normal ion selectivity in the typical high conductance, 'open' state. Binds various lipids, including the sphingolipid ceramide, the phospholipid phosphatidylcholine, and the sterols cholesterol and oxysterol. Binding of ceramide promotes the mitochondrial outer membrane permeabilization (MOMP) apoptotic pathway. Functionally, catalyzes the scrambling of phospholipids across the outer mitochondrial membrane; the mechanism is unrelated to channel activity and is capable of translocating both anionic and zwitterionic phospholipids. This Bos taurus (Bovine) protein is Non-selective voltage-gated ion channel VDAC2.